Here is a 314-residue protein sequence, read N- to C-terminus: Nucleoprotein (314 aa).

Residue Met1 is modified to N-acetylmethionine; by host. Tyr38, Tyr41, Arg118, Lys237, and Ser266 together coordinate RNA.

This sequence belongs to the tenuiviruses nucleocapsid protein family.

The protein localises to the virion. Its subcellular location is the host cytoplasm. In terms of biological role, encapsidates the genome, protecting it from nucleases. The encapsidated genomic RNA is termed the nucleocapsid (NC), and serves as template for viral transcription and replication. This chain is Nucleoprotein, found in Wheat yellow head virus (WYHV).